We begin with the raw amino-acid sequence, 452 residues long: Serine--tRNA ligase (452 aa).

251-253 (TSE) serves as a coordination point for L-serine. An ATP-binding site is contributed by 282–284 (RSE). Glutamate 305 lines the L-serine pocket. Residue 369–372 (EISS) participates in ATP binding. Position 404 (serine 404) interacts with L-serine.

This sequence belongs to the class-II aminoacyl-tRNA synthetase family. Type-1 seryl-tRNA synthetase subfamily. Homodimer. The tRNA molecule binds across the dimer.

The protein resides in the cytoplasm. It carries out the reaction tRNA(Ser) + L-serine + ATP = L-seryl-tRNA(Ser) + AMP + diphosphate + H(+). It catalyses the reaction tRNA(Sec) + L-serine + ATP = L-seryl-tRNA(Sec) + AMP + diphosphate + H(+). It participates in aminoacyl-tRNA biosynthesis; selenocysteinyl-tRNA(Sec) biosynthesis; L-seryl-tRNA(Sec) from L-serine and tRNA(Sec): step 1/1. In terms of biological role, catalyzes the attachment of serine to tRNA(Ser). Is also able to aminoacylate tRNA(Sec) with serine, to form the misacylated tRNA L-seryl-tRNA(Sec), which will be further converted into selenocysteinyl-tRNA(Sec). This Albidiferax ferrireducens (strain ATCC BAA-621 / DSM 15236 / T118) (Rhodoferax ferrireducens) protein is Serine--tRNA ligase.